Reading from the N-terminus, the 115-residue chain is Macrophage migration inhibitory factor (115 aa).

The active-site Proton acceptor; via imino nitrogen is Pro2. Substrate contacts are provided by Lys33 and Ile65. Position 78 is an N6-acetyllysine; alternate (Lys78). Lys78 carries the N6-succinyllysine; alternate modification. Position 98 (Asn98) interacts with substrate.

The protein belongs to the MIF family. As to quaternary structure, homotrimer. Interacts with CXCR2 extracellular domain. Interacts with the CD74 extracellular domain, USO1, COPS5 and BNIPL.

Its subcellular location is the secreted. The protein localises to the cytoplasm. The enzyme catalyses 3-phenylpyruvate = enol-phenylpyruvate. It carries out the reaction L-dopachrome = 5,6-dihydroxyindole-2-carboxylate. Functionally, pro-inflammatory cytokine involved in the innate immune response to bacterial pathogens. The expression of MIF at sites of inflammation suggests a role as mediator in regulating the function of macrophages in host defense. Counteracts the anti-inflammatory activity of glucocorticoids. Has phenylpyruvate tautomerase and dopachrome tautomerase activity (in vitro), but the physiological substrate is not known. It is not clear whether the tautomerase activity has any physiological relevance, and whether it is important for cytokine activity. The protein is Macrophage migration inhibitory factor (MIF) of Meriones unguiculatus (Mongolian jird).